Here is a 65-residue protein sequence, read N- to C-terminus: Large ribosomal subunit protein bL35 (65 aa).

Positions 23–44 are disordered; sequence KRMKAGKQHILTKKSQKTKRNL.

It belongs to the bacterial ribosomal protein bL35 family.

In Lachnoclostridium phytofermentans (strain ATCC 700394 / DSM 18823 / ISDg) (Clostridium phytofermentans), this protein is Large ribosomal subunit protein bL35.